The chain runs to 328 residues: NADH-quinone oxidoreductase subunit H 1 (328 aa).

Transmembrane regions (helical) follow at residues 11-31, 81-101, 116-136, 154-174, 189-209, 235-257, 269-289, and 308-328; these read VVKA…FLLF, LAPV…PWAP, VLVI…GGWA, ISYE…TGSV, LFPQ…EAGW, GLFF…TFFL, IPGF…LYWI, and VLLP…ALWA.

This sequence belongs to the complex I subunit 1 family. NDH-1 is composed of 14 different subunits. Subunits NuoA, H, J, K, L, M, N constitute the membrane sector of the complex.

The protein localises to the cell membrane. It catalyses the reaction a quinone + NADH + 5 H(+)(in) = a quinol + NAD(+) + 4 H(+)(out). Functionally, NDH-1 shuttles electrons from NADH, via FMN and iron-sulfur (Fe-S) centers, to quinones in the respiratory chain. The immediate electron acceptor for the enzyme in this species is believed to be ubiquinone. Couples the redox reaction to proton translocation (for every two electrons transferred, four hydrogen ions are translocated across the cytoplasmic membrane), and thus conserves the redox energy in a proton gradient. This subunit may bind ubiquinone. In Symbiobacterium thermophilum (strain DSM 24528 / JCM 14929 / IAM 14863 / T), this protein is NADH-quinone oxidoreductase subunit H 1.